Consider the following 525-residue polypeptide: Probable lipid II flippase MurJ (525 aa).

Transmembrane regions (helical) follow at residues 10–30 (LLKSGIIVSAMTLISRVLGLV), 32–52 (DVVVANLMGAGASADVFFFAN), 100–120 (VLVTIVTLIGVLGSGAVTALF), 140–160 (LASLLLKITFPYLWFITFVAL), 171–191 (FAVSSFTPVFLNVMMILCAWY), 203–223 (LAIGVFLGGLVQFLFQLPFLI), 247–267 (MIPALFGVSVSQINLLFDSFV), 285–305 (LLEFPLGLFGIAIATVILPAL), 330–350 (FLGIPAMLGLMVLAKPMLMVL), 368–388 (LLAYSSGLLSFMLIKVLAPGY), 402–422 (IIAMVSNIVLNAIFAWFYGYV), 423–443 (GLAVATSMSAFLNMALLYRGL), 455–475 (TVWFVARLAMAGAVMTGALLW), and 495–515 (LTGLIGLGVASYLAILLLLGV).

Belongs to the MurJ/MviN family.

It is found in the cell inner membrane. It functions in the pathway cell wall biogenesis; peptidoglycan biosynthesis. In terms of biological role, involved in peptidoglycan biosynthesis. Transports lipid-linked peptidoglycan precursors from the inner to the outer leaflet of the cytoplasmic membrane. In Vibrio cholerae serotype O1 (strain ATCC 39315 / El Tor Inaba N16961), this protein is Probable lipid II flippase MurJ.